We begin with the raw amino-acid sequence, 332 residues long: Probable cytosolic iron-sulfur protein assembly protein 1 (332 aa).

WD repeat units follow at residues 9–48 (GHTDRAWAASVHPNLPLLATCSGDKTVRIYNTNNWELVTT), 52–93 (GHNR…WQFL), 98–137 (GHENEVKGVSWSCDGQLLATCSRDKSIWVWEADDMNDEFE), 144–183 (DHTQDVKHVAWHPSEMVFASASYDDTVRLWREDDDDWICV), 188–230 (GHES…GGTG), 257–295 (AHTRAIYSVAWNKNGRIASTGADGKLVVYKENGPGQWVV), and 302–332 (AHGVYEVNDVVWLDDKLVTSGDDGVVNIWEV).

The protein belongs to the WD repeat CIA1 family. In terms of assembly, interacts with NAR1.

It localises to the cytoplasm. Its subcellular location is the nucleus. In terms of biological role, essential component of the cytosolic iron-sulfur (Fe/S) protein assembly machinery. Required for the maturation of extramitochondrial Fe/S proteins. This chain is Probable cytosolic iron-sulfur protein assembly protein 1, found in Yarrowia lipolytica (strain CLIB 122 / E 150) (Yeast).